The following is a 369-amino-acid chain: Molybdenum import ATP-binding protein ModC (369 aa).

Residues 4–239 enclose the ABC transporter domain; that stretch reads LQLRAVVADR…PRSRFGARIA (236 aa). Residue 31–38 coordinates ATP; the sequence is GPNGAGKS. The region spanning 293–361 is the Mop domain; sequence HGSPRNIVGL…VKAQEVALHP (69 aa).

It belongs to the ABC transporter superfamily. Molybdate importer (TC 3.A.1.8) family. The complex is composed of two ATP-binding proteins (ModC), two transmembrane proteins (ModB) and a solute-binding protein (ModA).

It localises to the cell membrane. The catalysed reaction is molybdate(out) + ATP + H2O = molybdate(in) + ADP + phosphate + H(+). In terms of biological role, part of the ABC transporter complex ModABC involved in molybdenum import. Responsible for energy coupling to the transport system. In Mycobacterium tuberculosis (strain CDC 1551 / Oshkosh), this protein is Molybdenum import ATP-binding protein ModC.